The following is a 419-amino-acid chain: Copalyl diphosphate synthase 2, chloroplastic (419 aa).

Lysine 82 contacts substrate.

The protein belongs to the terpene synthase family. Tpsc subfamily. Requires Mg(2+) as cofactor. As to expression, ubiquitous expression in roots, stems, leaves and flowers.

The protein localises to the plastid. Its subcellular location is the chloroplast. The catalysed reaction is (2E,6E,10E)-geranylgeranyl diphosphate = (+)-copalyl diphosphate. It functions in the pathway secondary metabolite biosynthesis; terpenoid biosynthesis. Its function is as follows. Involved in the biosynthesis of ent-kaurene diterpenoids natural products such as oridonin, miltiradiene, eriocalyxin B and nezukol, known to exhibit antitumor, anti-inflammatory and antibacterial activities. Catalyzes the conversion of (2E,6E,10E)-geranylgeranyl diphosphate (GGPP) to (+)-copalyl diphosphate ((+)-CPP). The protein is Copalyl diphosphate synthase 2, chloroplastic of Isodon rubescens (Rabdosia rubescens).